Consider the following 206-residue polypeptide: Small ribosomal subunit protein uS5 (206 aa).

Residues methionine 1–aspartate 42 are disordered. One can recognise an S5 DRBM domain in the interval phenylalanine 43–valine 106.

Belongs to the universal ribosomal protein uS5 family. Part of the 30S ribosomal subunit. Contacts proteins S4 and S8.

Functionally, with S4 and S12 plays an important role in translational accuracy. Its function is as follows. Located at the back of the 30S subunit body where it stabilizes the conformation of the head with respect to the body. The polypeptide is Small ribosomal subunit protein uS5 (Mesoplasma florum (strain ATCC 33453 / NBRC 100688 / NCTC 11704 / L1) (Acholeplasma florum)).